The primary structure comprises 346 residues: Ribosomal RNA small subunit methyltransferase H (346 aa).

Residues 46–48 (GGY), aspartate 63, phenylalanine 90, aspartate 113, and glutamine 120 each bind S-adenosyl-L-methionine. The segment at 270 to 346 (GGSAGSRHMP…LPETNELARS (77 aa)) is disordered.

The protein belongs to the methyltransferase superfamily. RsmH family.

It localises to the cytoplasm. The enzyme catalyses cytidine(1402) in 16S rRNA + S-adenosyl-L-methionine = N(4)-methylcytidine(1402) in 16S rRNA + S-adenosyl-L-homocysteine + H(+). Its function is as follows. Specifically methylates the N4 position of cytidine in position 1402 (C1402) of 16S rRNA. In Brucella abortus (strain S19), this protein is Ribosomal RNA small subunit methyltransferase H.